The sequence spans 733 residues: Phosphoribosylformylglycinamidine synthase subunit PurL (733 aa).

H42 is an active-site residue. ATP contacts are provided by Y45 and K84. A Mg(2+)-binding site is contributed by E86. Residues 87 to 90 and R109 each bind substrate; that span reads SHNH. H88 serves as the catalytic Proton acceptor. D110 contacts Mg(2+). A substrate-binding site is contributed by Q233. A Mg(2+)-binding site is contributed by D261. 305-307 contacts substrate; the sequence is ESQ. 2 residues coordinate ATP: D489 and G526. N527 is a Mg(2+) binding site. S529 is a substrate binding site.

It belongs to the FGAMS family. In terms of assembly, monomer. Part of the FGAM synthase complex composed of 1 PurL, 1 PurQ and 2 PurS subunits.

The protein localises to the cytoplasm. The enzyme catalyses N(2)-formyl-N(1)-(5-phospho-beta-D-ribosyl)glycinamide + L-glutamine + ATP + H2O = 2-formamido-N(1)-(5-O-phospho-beta-D-ribosyl)acetamidine + L-glutamate + ADP + phosphate + H(+). It functions in the pathway purine metabolism; IMP biosynthesis via de novo pathway; 5-amino-1-(5-phospho-D-ribosyl)imidazole from N(2)-formyl-N(1)-(5-phospho-D-ribosyl)glycinamide: step 1/2. In terms of biological role, part of the phosphoribosylformylglycinamidine synthase complex involved in the purines biosynthetic pathway. Catalyzes the ATP-dependent conversion of formylglycinamide ribonucleotide (FGAR) and glutamine to yield formylglycinamidine ribonucleotide (FGAM) and glutamate. The FGAM synthase complex is composed of three subunits. PurQ produces an ammonia molecule by converting glutamine to glutamate. PurL transfers the ammonia molecule to FGAR to form FGAM in an ATP-dependent manner. PurS interacts with PurQ and PurL and is thought to assist in the transfer of the ammonia molecule from PurQ to PurL. This chain is Phosphoribosylformylglycinamidine synthase subunit PurL, found in Moorella thermoacetica (strain ATCC 39073 / JCM 9320).